Consider the following 1057-residue polypeptide: Carbamoyl phosphate synthase large chain (1057 aa).

Residues 1–401 are carboxyphosphate synthetic domain; the sequence is MPKRDDIQTI…SLLKAIRSLE (401 aa). ATP-binding residues include arginine 129, arginine 169, glycine 175, glycine 176, lysine 208, isoleucine 210, glutamate 215, glycine 241, isoleucine 242, histidine 243, glutamine 284, and glutamate 298. Positions 133–327 constitute an ATP-grasp 1 domain; it reads RSLMNDLNVP…IAKLAAKIAV (195 aa). Mg(2+)-binding residues include glutamine 284, glutamate 298, and asparagine 300. Mn(2+) is bound by residues glutamine 284, glutamate 298, and asparagine 300. Positions 402–546 are oligomerization domain; sequence YGVHHLGLPN…YGTYETENES (145 aa). The tract at residues 547-929 is carbamoyl phosphate synthetic domain; that stretch reads IVTDKEKILV…ALYKGLTGSG (383 aa). Positions 671-861 constitute an ATP-grasp 2 domain; it reads EALLHTIDVP…MAQLAMQAIM (191 aa). The ATP site is built by arginine 707, arginine 746, leucine 748, glutamate 752, glycine 777, valine 778, histidine 779, serine 780, glutamine 820, and glutamate 832. 3 residues coordinate Mg(2+): glutamine 820, glutamate 832, and asparagine 834. Residues glutamine 820, glutamate 832, and asparagine 834 each contribute to the Mn(2+) site. Positions 930-1057 constitute an MGS-like domain; it reads VEVKDHGTVL…ESMTFSMRTM (128 aa). Residues 930 to 1057 form an allosteric domain region; that stretch reads VEVKDHGTVL…ESMTFSMRTM (128 aa).

The protein belongs to the CarB family. Composed of two chains; the small (or glutamine) chain promotes the hydrolysis of glutamine to ammonia, which is used by the large (or ammonia) chain to synthesize carbamoyl phosphate. Tetramer of heterodimers (alpha,beta)4. Mg(2+) is required as a cofactor. The cofactor is Mn(2+).

It catalyses the reaction hydrogencarbonate + L-glutamine + 2 ATP + H2O = carbamoyl phosphate + L-glutamate + 2 ADP + phosphate + 2 H(+). It carries out the reaction hydrogencarbonate + NH4(+) + 2 ATP = carbamoyl phosphate + 2 ADP + phosphate + 2 H(+). Its pathway is amino-acid biosynthesis; L-arginine biosynthesis; carbamoyl phosphate from bicarbonate: step 1/1. The protein operates within pyrimidine metabolism; UMP biosynthesis via de novo pathway; (S)-dihydroorotate from bicarbonate: step 1/3. In terms of biological role, large subunit of the glutamine-dependent carbamoyl phosphate synthetase (CPSase). CPSase catalyzes the formation of carbamoyl phosphate from the ammonia moiety of glutamine, carbonate, and phosphate donated by ATP, constituting the first step of 2 biosynthetic pathways, one leading to arginine and/or urea and the other to pyrimidine nucleotides. The large subunit (synthetase) binds the substrates ammonia (free or transferred from glutamine from the small subunit), hydrogencarbonate and ATP and carries out an ATP-coupled ligase reaction, activating hydrogencarbonate by forming carboxy phosphate which reacts with ammonia to form carbamoyl phosphate. This Staphylococcus haemolyticus (strain JCSC1435) protein is Carbamoyl phosphate synthase large chain.